A 704-amino-acid polypeptide reads, in one-letter code: Elongation factor G (704 aa).

The tr-type G domain occupies 8-290 (ARYRNIGISA…AVIDYLPAPT (283 aa)). GTP is bound by residues 17-24 (AHIDAGKT), 88-92 (DTPGH), and 142-145 (NKMD).

This sequence belongs to the TRAFAC class translation factor GTPase superfamily. Classic translation factor GTPase family. EF-G/EF-2 subfamily.

The protein localises to the cytoplasm. Its function is as follows. Catalyzes the GTP-dependent ribosomal translocation step during translation elongation. During this step, the ribosome changes from the pre-translocational (PRE) to the post-translocational (POST) state as the newly formed A-site-bound peptidyl-tRNA and P-site-bound deacylated tRNA move to the P and E sites, respectively. Catalyzes the coordinated movement of the two tRNA molecules, the mRNA and conformational changes in the ribosome. The sequence is that of Elongation factor G from Pectobacterium atrosepticum (strain SCRI 1043 / ATCC BAA-672) (Erwinia carotovora subsp. atroseptica).